The primary structure comprises 342 residues: Nucleoid-associated protein Shewmr4_2217 (342 aa).

It belongs to the YejK family.

The protein resides in the cytoplasm. It is found in the nucleoid. This is Nucleoid-associated protein Shewmr4_2217 from Shewanella sp. (strain MR-4).